The following is a 688-amino-acid chain: G protein-coupled receptor kinase 3 (688 aa).

Positions 1–190 (MADLEAVLAD…ELNIHLSMND (190 aa)) are N-terminal. The RGS domain maps to 54 to 175 (TFDKIFNQKI…MESEKFTRFC (122 aa)). The region spanning 191 to 453 (FSVHRIIGRG…ARELKEHIFF (263 aa)) is the Protein kinase domain. ATP-binding positions include 197-205 (IGRGGFGEV) and K220. The Proton acceptor role is filled by D317. The region spanning 454–521 (KGIDWQYVYL…MISERWQQEV (68 aa)) is the AGC-kinase C-terminal domain. Residues 558 to 652 (DCIMHGYMLK…WLKELTCTFN (95 aa)) enclose the PH domain.

It belongs to the protein kinase superfamily. AGC Ser/Thr protein kinase family. GPRK subfamily. As to quaternary structure, interacts with GIT1. Ubiquitinated. As to expression, expressed in brain cortex, hippocampus, striatum, hypothalamus, cerebellum and brainstem (at protein level).

The protein localises to the postsynapse. It is found in the presynapse. The enzyme catalyses [beta-adrenergic receptor] + ATP = [beta-adrenergic receptor]-phosphate + ADP + H(+). Its function is as follows. Specifically phosphorylates the agonist-occupied form of the beta-adrenergic and closely related receptors. This Rattus norvegicus (Rat) protein is G protein-coupled receptor kinase 3.